Here is a 625-residue protein sequence, read N- to C-terminus: DNA-directed RNA polymerase subunit gamma (625 aa).

Zn(2+)-binding residues include Cys-71, Cys-73, Cys-86, and Cys-89. Positions 467, 469, and 471 each coordinate Mg(2+).

This sequence belongs to the RNA polymerase beta' chain family. RpoC1 subfamily. As to quaternary structure, in cyanobacteria the RNAP catalytic core is composed of 2 alpha, 1 beta, 1 beta', 1 gamma and 1 omega subunit. When a sigma factor is associated with the core the holoenzyme is formed, which can initiate transcription. The cofactor is Mg(2+). Zn(2+) is required as a cofactor.

The catalysed reaction is RNA(n) + a ribonucleoside 5'-triphosphate = RNA(n+1) + diphosphate. DNA-dependent RNA polymerase catalyzes the transcription of DNA into RNA using the four ribonucleoside triphosphates as substrates. The protein is DNA-directed RNA polymerase subunit gamma of Nostoc punctiforme (strain ATCC 29133 / PCC 73102).